An 84-amino-acid polypeptide reads, in one-letter code: N.vectensis toxin 5 (84 aa).

The signal sequence occupies residues 1 to 21 (MNSLLKVAVVCLVMLVACSSG). Intrachain disulfides connect Cys45/Cys77, Cys47/Cys68, and Cys61/Cys78.

In terms of tissue distribution, expressed in ectodermal gland cells. In adult female tissues, highly transcribed in mesenteries (gametes-producing tissue) and slightly transcribed in tentacles, pharynx and physa.

Its function is as follows. Has toxic effects on zebrafish larvae. It causes contractile paralysis and twitching of the tail within 20 minutes, followed by death within 30 minutes. Does not show any toxicity when injected into arthropods (cherry shrimps or grass shrimps). This chain is N.vectensis toxin 5, found in Nematostella vectensis (Starlet sea anemone).